A 310-amino-acid polypeptide reads, in one-letter code: MSQPIVVAALYKFVTLEDYVELRDPLLKAMTDNGVKGTLLLANEGINGTVSATREGIDALLAWLRNDPRLVDVDHKESYCDEQPFYRTKVKLKKEIVTLGVPGVDPNKAVGTYVDPKDWNALISDPEVLLIDTRNDYEVAIGTFKGAIDPKTETFREFPDYIKANFDPSKHKKVAMFCTGGIRCEKASSYMLGEGFEAVYHLKGGILKYFEEVAQEESLWDGDCFVFDNRVTVRHDLSEGEYDQCHACRHPIDVKDRESEHYSPGVSCPHCWDTLSEKTRRSAIDRQKQIELAKARNQPHPIGYNYKAEA.

One can recognise a Rhodanese domain in the interval 124 to 218 (SDPEVLLIDT…YFEEVAQEES (95 aa)). Catalysis depends on Cys-178, which acts as the Cysteine persulfide intermediate.

Belongs to the TrhO family.

The enzyme catalyses uridine(34) in tRNA + AH2 + O2 = 5-hydroxyuridine(34) in tRNA + A + H2O. Functionally, catalyzes oxygen-dependent 5-hydroxyuridine (ho5U) modification at position 34 in tRNAs. In Pseudomonas entomophila (strain L48), this protein is tRNA uridine(34) hydroxylase.